The primary structure comprises 213 residues: NADH dehydrogenase [ubiquinone] iron-sulfur protein 7, mitochondrial (213 aa).

Residues 1-38 constitute a mitochondrion transit peptide; sequence MAALSAPGLCGFRILGLRSSVGTAVQARGVHQSVATDG. The tract at residues 32 to 53 is disordered; sequence QSVATDGPSSTQPALPKARAVA. Positions 33–44 are enriched in polar residues; sequence SVATDGPSSTQP. Cysteine 88 and cysteine 89 together coordinate [4Fe-4S] cluster. At arginine 111 the chain carries Hydroxyarginine. 2 residues coordinate [4Fe-4S] cluster: cysteine 153 and cysteine 183.

Belongs to the complex I 20 kDa subunit family. In terms of assembly, core subunit of respiratory chain NADH dehydrogenase (Complex I) which is composed of 45 different subunits. This is a component of the iron-sulfur (IP) fragment of the enzyme. [4Fe-4S] cluster serves as cofactor. Post-translationally, hydroxylated ar Arg-111 by NDUFAF5 early in the pathway of assembly of complex I, before the formation of the juncture between peripheral and membrane arms.

It localises to the mitochondrion inner membrane. It catalyses the reaction a ubiquinone + NADH + 5 H(+)(in) = a ubiquinol + NAD(+) + 4 H(+)(out). Its function is as follows. Core subunit of the mitochondrial membrane respiratory chain NADH dehydrogenase (Complex I) which catalyzes electron transfer from NADH through the respiratory chain, using ubiquinone as an electron acceptor. Essential for the catalytic activity of complex I. The protein is NADH dehydrogenase [ubiquinone] iron-sulfur protein 7, mitochondrial (NDUFS7) of Gorilla gorilla gorilla (Western lowland gorilla).